Reading from the N-terminus, the 84-residue chain is UPF0473 protein CPF_2030 (84 aa).

This sequence belongs to the UPF0473 family.

This Clostridium perfringens (strain ATCC 13124 / DSM 756 / JCM 1290 / NCIMB 6125 / NCTC 8237 / Type A) protein is UPF0473 protein CPF_2030.